The primary structure comprises 131 residues: Small ribosomal subunit protein uS8 (131 aa).

The protein belongs to the universal ribosomal protein uS8 family. As to quaternary structure, part of the 30S ribosomal subunit. Contacts proteins S5 and S12.

In terms of biological role, one of the primary rRNA binding proteins, it binds directly to 16S rRNA central domain where it helps coordinate assembly of the platform of the 30S subunit. This chain is Small ribosomal subunit protein uS8, found in Acinetobacter baumannii (strain AB307-0294).